The following is a 147-amino-acid chain: Small ribosomal subunit protein uS12 (147 aa).

Belongs to the universal ribosomal protein uS12 family. In terms of assembly, part of the 30S ribosomal subunit.

In terms of biological role, with S4 and S5 plays an important role in translational accuracy. Located at the interface of the 30S and 50S subunits. In Pyrococcus abyssi (strain GE5 / Orsay), this protein is Small ribosomal subunit protein uS12.